A 199-amino-acid polypeptide reads, in one-letter code: Holliday junction branch migration complex subunit RuvA (199 aa).

The domain I stretch occupies residues 1–63; the sequence is MIGCLIGEVF…EDAQQLYGFS (63 aa). Positions 64–142 are domain II; it reads DAQEKTIFRT…TLAQGTSSAA (79 aa). The segment at 143–150 is flexible linker; the sequence is ALPQIQFV. Positions 150 to 199 are domain III; the sequence is VSNSPVAEAEAALQSLGYKPLEAQKAVAAVKADYTESADIIRAALKSMMK.

It belongs to the RuvA family. In terms of assembly, homotetramer. Forms an RuvA(8)-RuvB(12)-Holliday junction (HJ) complex. HJ DNA is sandwiched between 2 RuvA tetramers; dsDNA enters through RuvA and exits via RuvB. An RuvB hexamer assembles on each DNA strand where it exits the tetramer. Each RuvB hexamer is contacted by two RuvA subunits (via domain III) on 2 adjacent RuvB subunits; this complex drives branch migration. In the full resolvosome a probable DNA-RuvA(4)-RuvB(12)-RuvC(2) complex forms which resolves the HJ.

The protein resides in the cytoplasm. Functionally, the RuvA-RuvB-RuvC complex processes Holliday junction (HJ) DNA during genetic recombination and DNA repair, while the RuvA-RuvB complex plays an important role in the rescue of blocked DNA replication forks via replication fork reversal (RFR). RuvA specifically binds to HJ cruciform DNA, conferring on it an open structure. The RuvB hexamer acts as an ATP-dependent pump, pulling dsDNA into and through the RuvAB complex. HJ branch migration allows RuvC to scan DNA until it finds its consensus sequence, where it cleaves and resolves the cruciform DNA. This chain is Holliday junction branch migration complex subunit RuvA, found in Acinetobacter baumannii (strain SDF).